The primary structure comprises 417 residues: Serine hydroxymethyltransferase (417 aa).

Residues Leu-121 and 125–127 contribute to the (6S)-5,6,7,8-tetrahydrofolate site; that span reads GHL. Lys-230 carries the N6-(pyridoxal phosphate)lysine modification. Residue 355 to 357 participates in (6S)-5,6,7,8-tetrahydrofolate binding; sequence SPF.

It belongs to the SHMT family. Homodimer. Pyridoxal 5'-phosphate is required as a cofactor.

It localises to the cytoplasm. It carries out the reaction (6R)-5,10-methylene-5,6,7,8-tetrahydrofolate + glycine + H2O = (6S)-5,6,7,8-tetrahydrofolate + L-serine. It participates in one-carbon metabolism; tetrahydrofolate interconversion. The protein operates within amino-acid biosynthesis; glycine biosynthesis; glycine from L-serine: step 1/1. Catalyzes the reversible interconversion of serine and glycine with tetrahydrofolate (THF) serving as the one-carbon carrier. This reaction serves as the major source of one-carbon groups required for the biosynthesis of purines, thymidylate, methionine, and other important biomolecules. Also exhibits THF-independent aldolase activity toward beta-hydroxyamino acids, producing glycine and aldehydes, via a retro-aldol mechanism. In Legionella pneumophila (strain Lens), this protein is Serine hydroxymethyltransferase.